Here is a 360-residue protein sequence, read N- to C-terminus: Photosystem II protein D1 1 (360 aa).

Topologically, residues 2–31 (TTTLQRRESANLWERFCNWVTSTDNRLYVG) are cytoplasmic. A helical transmembrane segment spans residues 32–53 (WFGVIMIPTLLAATICFVIAFI). The Lumenal portion of the chain corresponds to 54–110 (AAPPVDIDGIREPVSGSLLYGNNIITGAVVPSSNAIGLHFYPIWEAASLDEWLYNGG). Residues 111-132 (PYQLIIFHFLLGASCYMGRQWE) form a helical membrane-spanning segment. Position 118 (His118) interacts with chlorophyll a. Positions 126 and 130 each coordinate pheophytin a. The Cytoplasmic segment spans residues 133–142 (LSYRLGMRPW). The chain crosses the membrane as a helical span at residues 143 to 163 (ICVAYSAPLASAFAVFLIYPI). Residue Tyr147 participates in pheophytin a binding. The Lumenal portion of the chain corresponds to 164–191 (GQGSFSDGMPLGISGTFNFMIVFQAEHN). [CaMn4O5] cluster-binding residues include Asp170 and Glu189. A helical transmembrane segment spans residues 192–217 (ILMHPFHQLGVAGVFGGALFCAMHGS). Position 198 (His198) interacts with chlorophyll a. A quinone contacts are provided by residues His215 and 264-265 (SF). Fe cation is bound at residue His215. Topologically, residues 218 to 272 (LVTSSLIRETTETESANYGYKFGQEEETYNIVAAHGYFGRLIFQYASFNNSRSLH) are cytoplasmic. His272 provides a ligand contact to Fe cation. A helical transmembrane segment spans residues 273–295 (FFLAAWPVVGVWFTALGISTMAF). At 296–344 (NLNGFNFNHSVIDAKGNVINTWADIINRANLGMEVMHERNAHNFPLDLA) the chain is on the lumenal side. Positions 332, 333, 342, and 344 each coordinate [CaMn4O5] cluster. A propeptide spanning residues 345–360 (SAESAPVAMIAPSING) is cleaved from the precursor.

Belongs to the reaction center PufL/M/PsbA/D family. As to quaternary structure, PSII is composed of 1 copy each of membrane proteins PsbA, PsbB, PsbC, PsbD, PsbE, PsbF, PsbH, PsbI, PsbJ, PsbK, PsbL, PsbM, PsbT, PsbX, PsbY, PsbZ, Psb30/Ycf12, peripheral proteins PsbO, CyanoQ (PsbQ), PsbU, PsbV and a large number of cofactors. It forms dimeric complexes. Precursor protein interacts with Ycf48. Part of a photosystem II (PSII) assembly intermediate complex PSII-I; crystallized from a strain deleted of psbJ, it forms monomeric PSII before addition of the oxygen evolving complex. PSII-I includes 3 assembly factors not found in mature PSII (Psb27, Psb28 and Psb34). In PSII-I the C-terminus of D1 (this subunit) is already processed but not yet found at its final position. The D1/D2 heterodimer binds P680, chlorophylls that are the primary electron donor of PSII, and subsequent electron acceptors. It shares a non-heme iron and each subunit binds pheophytin, quinone, additional chlorophylls, carotenoids and lipids. D1 provides most of the ligands for the Mn4-Ca-O5 cluster of the oxygen-evolving complex (OEC). There is also a Cl(-1) ion associated with D1 and D2, which is required for oxygen evolution. PSII binds additional chlorophylls, carotenoids and specific lipids. is required as a cofactor. Post-translationally, C-terminally processed by CtpA; processing is essential to allow assembly of the oxygen-evolving complex and thus photosynthetic growth. Tyr-161 forms a radical intermediate that is referred to as redox-active TyrZ, YZ or Y-Z.

It localises to the cellular thylakoid membrane. It carries out the reaction 2 a plastoquinone + 4 hnu + 2 H2O = 2 a plastoquinol + O2. Its function is as follows. Photosystem II (PSII) is a light-driven water:plastoquinone oxidoreductase that uses light energy to abstract electrons from H(2)O, generating O(2) and a proton gradient subsequently used for ATP formation. It consists of a core antenna complex that captures photons, and an electron transfer chain that converts photonic excitation into a charge separation. The D1/D2 (PsbA/PsbD) reaction center heterodimer binds P680, the primary electron donor of PSII as well as several subsequent electron acceptors. The sequence is that of Photosystem II protein D1 1 from Thermosynechococcus vestitus (strain NIES-2133 / IAM M-273 / BP-1).